Reading from the N-terminus, the 205-residue chain is Large ribosomal subunit protein uL4 (205 aa).

The interval 48–79 (KAQKSRSDVSGGGKKPWKQKGSGHARAGTTRS) is disordered.

This sequence belongs to the universal ribosomal protein uL4 family. As to quaternary structure, part of the 50S ribosomal subunit.

In terms of biological role, one of the primary rRNA binding proteins, this protein initially binds near the 5'-end of the 23S rRNA. It is important during the early stages of 50S assembly. It makes multiple contacts with different domains of the 23S rRNA in the assembled 50S subunit and ribosome. Forms part of the polypeptide exit tunnel. This is Large ribosomal subunit protein uL4 from Methylococcus capsulatus (strain ATCC 33009 / NCIMB 11132 / Bath).